The primary structure comprises 336 residues: Ketol-acid reductoisomerase (NADP(+)) (336 aa).

The region spanning 5–185 (SKIYTDKDSN…GATRAGVIPT (181 aa)) is the KARI N-terminal Rossmann domain. Residues 28–31 (YGSQ), Ser-56, and 86–89 (DMVQ) contribute to the NADP(+) site. Residue His-111 is part of the active site. An NADP(+)-binding site is contributed by Gly-137. Residues 186 to 331 (TFKEETETDL…NQLKDLIQKG (146 aa)) form the KARI C-terminal knotted domain. Positions 194, 198, 230, and 234 each coordinate Mg(2+). Ser-255 provides a ligand contact to substrate.

It belongs to the ketol-acid reductoisomerase family. Requires Mg(2+) as cofactor.

It catalyses the reaction (2R)-2,3-dihydroxy-3-methylbutanoate + NADP(+) = (2S)-2-acetolactate + NADPH + H(+). The catalysed reaction is (2R,3R)-2,3-dihydroxy-3-methylpentanoate + NADP(+) = (S)-2-ethyl-2-hydroxy-3-oxobutanoate + NADPH + H(+). It functions in the pathway amino-acid biosynthesis; L-isoleucine biosynthesis; L-isoleucine from 2-oxobutanoate: step 2/4. It participates in amino-acid biosynthesis; L-valine biosynthesis; L-valine from pyruvate: step 2/4. In terms of biological role, involved in the biosynthesis of branched-chain amino acids (BCAA). Catalyzes an alkyl-migration followed by a ketol-acid reduction of (S)-2-acetolactate (S2AL) to yield (R)-2,3-dihydroxy-isovalerate. In the isomerase reaction, S2AL is rearranged via a Mg-dependent methyl migration to produce 3-hydroxy-3-methyl-2-ketobutyrate (HMKB). In the reductase reaction, this 2-ketoacid undergoes a metal-dependent reduction by NADPH to yield (R)-2,3-dihydroxy-isovalerate. The polypeptide is Ketol-acid reductoisomerase (NADP(+)) (Saccharolobus islandicus (strain Y.N.15.51 / Yellowstone #2) (Sulfolobus islandicus)).